The primary structure comprises 575 residues: Intermediate filament protein ifd-1 (575 aa).

The segment at 1 to 56 (MSKLNPRVAHNPVLSRIIESGRTNLPSGITSAGSLSAYAQAAAVTIRDNRDREKRE) is head. Residues 53–406 (EKREIADLNN…KLMEQAENLR (354 aa)) enclose the IF rod domain. Positions 57–88 (IADLNNRLARYVEKVRFLEAQNRVLENDIGLF) are coil 1A. The linker 1 stretch occupies residues 89 to 102 (RQAAHIHTGKVRDY). The coil 1B stretch occupies residues 103-240 (YDAEKTSLAT…STHEIAIREE (138 aa)). The tract at residues 241-258 (INKARRDSTDKNREFFHR) is linker 12. The tract at residues 259-408 (ELHMSMKEIR…MEQAENLRTS (150 aa)) is coil 2. The segment at 409 to 572 (YQSDFVIDTP…DEVGWYAHVS (164 aa)) is tail. Residues 459–575 (NTQQFRSYGK…GWYAHVSYSH (117 aa)) enclose the LTD domain.

It belongs to the intermediate filament family.

The protein localises to the cytoplasm. In terms of biological role, cytoplasmic intermediate filaments provide mechanical strength to cells. Not essential protein. The chain is Intermediate filament protein ifd-1 from Caenorhabditis elegans.